We begin with the raw amino-acid sequence, 175 residues long: UPF0398 protein SPP_0409 (175 aa).

It belongs to the UPF0398 family.

The protein is UPF0398 protein SPP_0409 of Streptococcus pneumoniae (strain P1031).